Here is a 365-residue protein sequence, read N- to C-terminus: S-adenosylmethionine:tRNA ribosyltransferase-isomerase (365 aa).

It belongs to the QueA family. In terms of assembly, monomer.

Its subcellular location is the cytoplasm. The enzyme catalyses 7-aminomethyl-7-carbaguanosine(34) in tRNA + S-adenosyl-L-methionine = epoxyqueuosine(34) in tRNA + adenine + L-methionine + 2 H(+). It participates in tRNA modification; tRNA-queuosine biosynthesis. Functionally, transfers and isomerizes the ribose moiety from AdoMet to the 7-aminomethyl group of 7-deazaguanine (preQ1-tRNA) to give epoxyqueuosine (oQ-tRNA). The sequence is that of S-adenosylmethionine:tRNA ribosyltransferase-isomerase from Rickettsia peacockii (strain Rustic).